Reading from the N-terminus, the 620-residue chain is Glutathione-regulated potassium-efflux system protein KefC (620 aa).

12 consecutive transmembrane segments (helical) span residues 4 to 24 (HTLI…PIAV), 26 to 46 (LGLG…PWGL), 54 to 74 (SILH…GLEL), 90 to 110 (GALQ…LLGL), 114 to 134 (VAEL…MQAM), 149 to 169 (FAVL…IPLL), 178 to 198 (MGAF…VVLL), 218 to 238 (VFSA…EEVG), 270 to 290 (GLLL…GTLL), 294 to 314 (LRIV…LWLI), 327 to 347 (WFAV…GAAQ), and 359 to 379 (SLTL…VILN). The region spanning 399-518 (QPRVIIAGFG…AGVEKPERET (120 aa)) is the RCK N-terminal domain. Positions 597–620 (GWQGTEEGKHTGNMADEPETKPSS) are disordered.

This sequence belongs to the monovalent cation:proton antiporter 2 (CPA2) transporter (TC 2.A.37) family. KefC subfamily. In terms of assembly, homodimer. Interacts with the regulatory subunit KefF.

The protein localises to the cell inner membrane. Its function is as follows. Pore-forming subunit of a potassium efflux system that confers protection against electrophiles. Catalyzes K(+)/H(+) antiport. The sequence is that of Glutathione-regulated potassium-efflux system protein KefC from Escherichia coli O6:K15:H31 (strain 536 / UPEC).